Here is a 160-residue protein sequence, read N- to C-terminus: Transcription elongation factor GreA (160 aa).

Positions 50–70 (AAREQQSFNEGRIQELEAKLS) form a coiled coil.

The protein belongs to the GreA/GreB family.

Functionally, necessary for efficient RNA polymerase transcription elongation past template-encoded arresting sites. The arresting sites in DNA have the property of trapping a certain fraction of elongating RNA polymerases that pass through, resulting in locked ternary complexes. Cleavage of the nascent transcript by cleavage factors such as GreA or GreB allows the resumption of elongation from the new 3'terminus. GreA releases sequences of 2 to 3 nucleotides. The polypeptide is Transcription elongation factor GreA (Legionella pneumophila (strain Paris)).